Consider the following 164-residue polypeptide: UPF0114 protein YqhA (164 aa).

3 helical membrane-spanning segments follow: residues Tyr-10–Leu-32, Leu-53–Phe-75, and Leu-136–Tyr-155.

The protein belongs to the UPF0114 family.

It localises to the cell membrane. This is UPF0114 protein YqhA from Salmonella typhi.